We begin with the raw amino-acid sequence, 244 residues long: Type III pantothenate kinase (244 aa).

7-14 contacts ATP; sequence DIGNTRLK. Substrate contacts are provided by residues Tyr95 and 102 to 105; that span reads GIDR. The active-site Proton acceptor is the Asp104. Thr126 contacts ATP. Thr177 provides a ligand contact to substrate.

This sequence belongs to the type III pantothenate kinase family. As to quaternary structure, homodimer. It depends on NH4(+) as a cofactor. K(+) serves as cofactor.

The protein localises to the cytoplasm. The enzyme catalyses (R)-pantothenate + ATP = (R)-4'-phosphopantothenate + ADP + H(+). It participates in cofactor biosynthesis; coenzyme A biosynthesis; CoA from (R)-pantothenate: step 1/5. In terms of biological role, catalyzes the phosphorylation of pantothenate (Pan), the first step in CoA biosynthesis. This Acinetobacter baumannii (strain AB307-0294) protein is Type III pantothenate kinase.